Here is a 1054-residue protein sequence, read N- to C-terminus: DNA-directed RNA polymerase subunit beta' (1054 aa).

Asp383, Asp385, and Asp387 together coordinate Mg(2+). Zn(2+) contacts are provided by Cys752, Cys826, Cys833, and Cys836.

It belongs to the RNA polymerase beta' chain family. As to quaternary structure, the RNAP catalytic core consists of 2 alpha, 1 beta, 1 beta' and 1 omega subunit. When a sigma factor is associated with the core the holoenzyme is formed, which can initiate transcription. Requires Mg(2+) as cofactor. Zn(2+) serves as cofactor.

It carries out the reaction RNA(n) + a ribonucleoside 5'-triphosphate = RNA(n+1) + diphosphate. Its function is as follows. DNA-dependent RNA polymerase catalyzes the transcription of DNA into RNA using the four ribonucleoside triphosphates as substrates. This Weissella paramesenteroides (Leuconostoc paramesenteroides) protein is DNA-directed RNA polymerase subunit beta'.